Here is a 534-residue protein sequence, read N- to C-terminus: 2,3-bisphosphoglycerate-independent phosphoglycerate mutase (534 aa).

Mn(2+)-binding residues include aspartate 15 and serine 65. The Phosphoserine intermediate role is filled by serine 65. Substrate-binding positions include histidine 126, 156 to 157 (RD), arginine 188, arginine 194, 261 to 264 (RPDR), and lysine 334. Positions 401, 405, 442, 443, and 460 each coordinate Mn(2+).

It belongs to the BPG-independent phosphoglycerate mutase family. The cofactor is Mn(2+).

It is found in the plastid. The protein resides in the chloroplast. It catalyses the reaction (2R)-2-phosphoglycerate = (2R)-3-phosphoglycerate. Its pathway is carbohydrate degradation; glycolysis; pyruvate from D-glyceraldehyde 3-phosphate: step 3/5. Functionally, catalyzes the interconversion of 2-phosphoglycerate and 3-phosphoglycerate. The sequence is that of 2,3-bisphosphoglycerate-independent phosphoglycerate mutase from Pyropia yezoensis (Susabi-nori).